A 938-amino-acid chain; its full sequence is Bifunctional glutamine synthetase adenylyltransferase/adenylyl-removing enzyme (938 aa).

The interval 1 to 457 (MLEADAARLK…HFDHVFGDPS (457 aa)) is adenylyl removase. An adenylyl transferase region spans residues 460 to 938 (AHTLDSMWAA…ALWTIVFGSA (479 aa)).

It belongs to the GlnE family. Mg(2+) is required as a cofactor.

It catalyses the reaction [glutamine synthetase]-O(4)-(5'-adenylyl)-L-tyrosine + phosphate = [glutamine synthetase]-L-tyrosine + ADP. It carries out the reaction [glutamine synthetase]-L-tyrosine + ATP = [glutamine synthetase]-O(4)-(5'-adenylyl)-L-tyrosine + diphosphate. Its function is as follows. Involved in the regulation of glutamine synthetase GlnA, a key enzyme in the process to assimilate ammonia. When cellular nitrogen levels are high, the C-terminal adenylyl transferase (AT) inactivates GlnA by covalent transfer of an adenylyl group from ATP to specific tyrosine residue of GlnA, thus reducing its activity. Conversely, when nitrogen levels are low, the N-terminal adenylyl removase (AR) activates GlnA by removing the adenylyl group by phosphorolysis, increasing its activity. The regulatory region of GlnE binds the signal transduction protein PII (GlnB) which indicates the nitrogen status of the cell. This chain is Bifunctional glutamine synthetase adenylyltransferase/adenylyl-removing enzyme, found in Aromatoleum aromaticum (strain DSM 19018 / LMG 30748 / EbN1) (Azoarcus sp. (strain EbN1)).